A 96-amino-acid chain; its full sequence is Protein Vpr (96 aa).

The interval 1–42 is homooligomerization; sequence MEQAPEDQGPQREPYNQWALELLEELKNEAVRHFPRIWLHGL. 3 positions are modified to phosphoserine; by host: serine 79, serine 94, and serine 96.

It belongs to the HIV-1 VPR protein family. As to quaternary structure, homooligomer, may form homodimer. Interacts with p6-gag region of the Pr55 Gag precursor protein through a (Leu-X-X)4 motif near the C-terminus of the P6gag protein. Interacts with host UNG. May interact with host RAD23A/HHR23A. Interacts with host VPRBP/DCAF1, leading to hijack the CUL4A-RBX1-DDB1-DCAF1/VPRBP complex, mediating ubiquitination of host proteins such as TERT and ZGPAT and arrest of the cell cycle in G2 phase. Post-translationally, phosphorylated on several residues by host. These phosphorylations regulate VPR activity for the nuclear import of the HIV-1 pre-integration complex.

It is found in the virion. Its subcellular location is the host nucleus. It localises to the host extracellular space. Functionally, during virus replication, may deplete host UNG protein, and incude G2-M cell cycle arrest. Acts by targeting specific host proteins for degradation by the 26S proteasome, through association with the cellular CUL4A-DDB1 E3 ligase complex by direct interaction with host VPRPB/DCAF-1. Cell cycle arrest reportedly occurs within hours of infection and is not blocked by antiviral agents, suggesting that it is initiated by the VPR carried into the virion. Additionally, VPR induces apoptosis in a cell cycle dependent manner suggesting that these two effects are mechanistically linked. Detected in the serum and cerebrospinal fluid of AIDS patient, VPR may also induce cell death to bystander cells. Its function is as follows. During virus entry, plays a role in the transport of the viral pre-integration (PIC) complex to the host nucleus. This function is crucial for viral infection of non-dividing macrophages. May act directly at the nuclear pore complex, by binding nucleoporins phenylalanine-glycine (FG)-repeat regions. The sequence is that of Protein Vpr from Human immunodeficiency virus type 1 group M subtype B (isolate MN) (HIV-1).